The sequence spans 418 residues: 26S proteasome regulatory subunit 6B (418 aa).

Met1 carries the post-translational modification N-acetylmethionine. At Ser21 the chain carries Phosphoserine. Residue Thr25 is modified to Phosphothreonine. A Phosphoserine modification is found at Ser28. 206–213 (GPPGCGKT) is a binding site for ATP. Residues Lys397 and Lys401 each carry the N6-acetyllysine modification.

The protein belongs to the AAA ATPase family. In terms of assembly, component of the 19S proteasome regulatory particle complex. The 26S proteasome consists of a 20S core particle (CP) and two 19S regulatory subunits (RP). The regulatory particle is made of a lid composed of 9 subunits, a base containing 6 ATPases including PSMC4 and few additional components. Interacts with NR1I3. Interacts with PAAF1. Interacts with TRIM5. Interacts with ZFAND1.

It is found in the cytoplasm. It localises to the nucleus. Component of the 26S proteasome, a multiprotein complex involved in the ATP-dependent degradation of ubiquitinated proteins. This complex plays a key role in the maintenance of protein homeostasis by removing misfolded or damaged proteins, which could impair cellular functions, and by removing proteins whose functions are no longer required. Therefore, the proteasome participates in numerous cellular processes, including cell cycle progression, apoptosis, or DNA damage repair. PSMC4 belongs to the heterohexameric ring of AAA (ATPases associated with diverse cellular activities) proteins that unfolds ubiquitinated target proteins that are concurrently translocated into a proteolytic chamber and degraded into peptides. The polypeptide is 26S proteasome regulatory subunit 6B (PSMC4) (Bos taurus (Bovine)).